The following is a 466-amino-acid chain: Pentatricopeptide repeat-containing protein At4g01400, mitochondrial (466 aa).

The transit peptide at 1–34 (MIRRPIYDFAAVFRHLTSPLSTSSRFLFYSSSEH) directs the protein to the mitochondrion. PPR repeat units lie at residues 118–152 (TGEI…NFTP), 153–188 (QPKH…GVMP), 189–223 (NTRS…DVVP), 224–258 (DVDS…GFVP), 259–293 (DRLS…GCNP), 294–328 (DLVH…GCSP), 329–363 (NSVS…GFSP), and 364–398 (HFSV…GETL).

It belongs to the PPR family. P subfamily.

It localises to the mitochondrion. In Arabidopsis thaliana (Mouse-ear cress), this protein is Pentatricopeptide repeat-containing protein At4g01400, mitochondrial.